The primary structure comprises 211 residues: Thiamine-phosphate synthase (211 aa).

Residues 37–41 and Asn69 contribute to the 4-amino-2-methyl-5-(diphosphooxymethyl)pyrimidine site; that span reads QLRIK. Positions 70 and 89 each coordinate Mg(2+). Ser108 provides a ligand contact to 4-amino-2-methyl-5-(diphosphooxymethyl)pyrimidine. Residue 134-136 coordinates 2-[(2R,5Z)-2-carboxy-4-methylthiazol-5(2H)-ylidene]ethyl phosphate; that stretch reads TQT. Lys137 serves as a coordination point for 4-amino-2-methyl-5-(diphosphooxymethyl)pyrimidine. 2-[(2R,5Z)-2-carboxy-4-methylthiazol-5(2H)-ylidene]ethyl phosphate contacts are provided by residues Gly166 and 186–187; that span reads VS.

This sequence belongs to the thiamine-phosphate synthase family. It depends on Mg(2+) as a cofactor.

It catalyses the reaction 2-[(2R,5Z)-2-carboxy-4-methylthiazol-5(2H)-ylidene]ethyl phosphate + 4-amino-2-methyl-5-(diphosphooxymethyl)pyrimidine + 2 H(+) = thiamine phosphate + CO2 + diphosphate. The enzyme catalyses 2-(2-carboxy-4-methylthiazol-5-yl)ethyl phosphate + 4-amino-2-methyl-5-(diphosphooxymethyl)pyrimidine + 2 H(+) = thiamine phosphate + CO2 + diphosphate. It carries out the reaction 4-methyl-5-(2-phosphooxyethyl)-thiazole + 4-amino-2-methyl-5-(diphosphooxymethyl)pyrimidine + H(+) = thiamine phosphate + diphosphate. It participates in cofactor biosynthesis; thiamine diphosphate biosynthesis; thiamine phosphate from 4-amino-2-methyl-5-diphosphomethylpyrimidine and 4-methyl-5-(2-phosphoethyl)-thiazole: step 1/1. Functionally, condenses 4-methyl-5-(beta-hydroxyethyl)thiazole monophosphate (THZ-P) and 2-methyl-4-amino-5-hydroxymethyl pyrimidine pyrophosphate (HMP-PP) to form thiamine monophosphate (TMP). This Shigella sonnei (strain Ss046) protein is Thiamine-phosphate synthase.